The primary structure comprises 551 residues: Tetrachloroethene reductive dehalogenase (551 aa).

The segment at residues methionine 1 to alanine 39 is a signal peptide (tat-type signal). In terms of domain architecture, 4Fe-4S ferredoxin-type 1 spans proline 411–aspartate 440. Residues cysteine 420, cysteine 423, cysteine 426, cysteine 430, cysteine 467, cysteine 478, cysteine 481, and cysteine 485 each coordinate [4Fe-4S] cluster. The region spanning cysteine 478 to aspartate 496 is the 4Fe-4S ferredoxin-type 2 domain.

Belongs to the PceA family. As to quaternary structure, monomer. [4Fe-4S] cluster serves as cofactor. Requires corrinoid as cofactor. In terms of processing, predicted to be exported by the Tat system. The position of the signal peptide cleavage has been experimentally proven.

It localises to the cell membrane. The catalysed reaction is trichloroethene + chloride + A + H(+) = tetrachloroethene + AH2. It catalyses the reaction trichloroethene + AH2 = (Z)-1,2-dichloroethene + chloride + A + H(+). With respect to regulation, activity is inhibited by ammonium ions. Photoreversibly inactivated by 1-iodopropane. Catalyzes the reductive dechlorination of tetrachloroethene (PCE) to trichloroethene (TCE) and of trichloroethene to cis-1,2-dichloroethene (DCE). Can also use trichlorofluoroethene, tetrachloromethane, hexachloroethane, tetrachloroethane, trichloroethane and 1,1,1-trichloro-2,2,2-trifluoroethane. Menaquinone can act as the electron donor. Reduced methyl viologen can act as the artificial electron donor. This is Tetrachloroethene reductive dehalogenase from Dehalobacter restrictus (strain DSM 9455 / PER-K23).